We begin with the raw amino-acid sequence, 329 residues long: uncharacterized protein (329 aa).

Disordered regions lie at residues Arg16–Cys41 and Leu183–Pro229. Positions Ser213 to Pro229 are enriched in basic and acidic residues.

In terms of tissue distribution, expressed in testis and epididymis. Expressed at lower levels in ovary.

In terms of biological role, dispensable for normal development and fertility. This is an uncharacterized protein from Mus musculus (Mouse).